The chain runs to 450 residues: Pancreatic triacylglycerol lipase (450 aa).

3 disulfides stabilise this stretch: Cys4/Cys10, Cys91/Cys102, and Cys91/Cys104. The Nucleophile role is filled by Ser153. Asn167 carries an N-linked (GlcNAc...) asparagine glycan. The active-site Charge relay system is Asp177. Glu188, Arg191, Asp193, and Asp196 together coordinate Ca(2+). The cysteines at positions 238 and 262 are disulfide-linked. The active-site Charge relay system is the His264. 3 disulfide bridges follow: Cys286-Cys297, Cys300-Cys305, and Cys434-Cys450. One can recognise a PLAT domain in the interval 339 to 450 (WRYKVSVTLS…EEVLLTLNPC (112 aa)).

Belongs to the AB hydrolase superfamily. Lipase family. In terms of assembly, forms a 1:1 stoichiometric complex with (pro)colipase/CLPS.

It localises to the secreted. It carries out the reaction a triacylglycerol + H2O = a diacylglycerol + a fatty acid + H(+). It catalyses the reaction 1,2,3-tributanoylglycerol + H2O = dibutanoylglycerol + butanoate + H(+). The enzyme catalyses 1,2,3-tri-(9Z-octadecenoyl)-glycerol + H2O = di-(9Z)-octadecenoylglycerol + (9Z)-octadecenoate + H(+). The catalysed reaction is all-trans-retinyl hexadecanoate + H2O = all-trans-retinol + hexadecanoate + H(+). It carries out the reaction 1,2-di-(9Z-octadecenoyl)-glycerol + H2O = (9Z-octadecenoyl)-glycerol + (9Z)-octadecenoate + H(+). Its activity is regulated as follows. Inhibited by bile salts, is reactivated by (pro)colipase/CLPS. Its function is as follows. Plays an important role in fat metabolism. It preferentially splits the esters of long-chain fatty acids at positions 1 and 3, producing mainly 2-monoacylglycerol and free fatty acids, and shows considerably higher activity against insoluble emulsified substrates than against soluble ones. The sequence is that of Pancreatic triacylglycerol lipase (PNLIP) from Sus scrofa (Pig).